The primary structure comprises 204 residues: Small ribosomal subunit protein uS4c (204 aa).

In terms of domain architecture, S4 RNA-binding spans 90–150; sequence MRLDNILYRL…GKKTDQLKTI (61 aa).

The protein belongs to the universal ribosomal protein uS4 family. As to quaternary structure, part of the 30S ribosomal subunit. Contacts protein S5. The interaction surface between S4 and S5 is involved in control of translational fidelity.

The protein localises to the plastid. Its subcellular location is the chloroplast. One of the primary rRNA binding proteins, it binds directly to 16S rRNA where it nucleates assembly of the body of the 30S subunit. Its function is as follows. With S5 and S12 plays an important role in translational accuracy. The sequence is that of Small ribosomal subunit protein uS4c (rps4) from Gnetum parvifolium (Small-leaved jointfir).